The chain runs to 521 residues: DEAD-box ATP-dependent RNA helicase 12 (521 aa).

The tract at residues 1 to 97 (MHHPRARYPP…QQWLRRDQAT (97 aa)) is disordered. A compositionally biased stretch (gly residues) spans 13-50 (TSGGGGGGGGGGGGGRGNGGGGFGGGGGGGGGNHGYYG). Positions 51-89 (RGPQPQPQQQHYHHQAQQLHQHQQQQQHAQRNSSSQQQQ) are enriched in low complexity. Positions 147–175 (NEFEDYFLKRELLMGIYEKGFERPSPIQE) match the Q motif motif. One can recognise a Helicase ATP-binding domain in the interval 178–348 (IPIALTGSDI…EKYLPRPYVI (171 aa)). 191 to 198 (AKNGTGKT) is a binding site for ATP. The short motif at 296–299 (DEAD) is the DEAD box element. The 161-residue stretch at 358–518 (GITQYYAFVE…TIPPQIDLAV (161 aa)) folds into the Helicase C-terminal domain.

It belongs to the DEAD box helicase family. DDX6/DHH1 subfamily.

The protein resides in the cytoplasm. It localises to the P-body. It catalyses the reaction ATP + H2O = ADP + phosphate + H(+). ATP-dependent RNA helicase involved in mRNA turnover, and more specifically in mRNA decapping. The chain is DEAD-box ATP-dependent RNA helicase 12 from Oryza sativa subsp. japonica (Rice).